Consider the following 280-residue polypeptide: Ribosomal RNA small subunit methyltransferase A (280 aa).

Residues Asn30, Val32, Gly57, Glu78, Asp108, and Asn125 each contribute to the S-adenosyl-L-methionine site.

The protein belongs to the class I-like SAM-binding methyltransferase superfamily. rRNA adenine N(6)-methyltransferase family. RsmA subfamily.

The protein resides in the cytoplasm. The catalysed reaction is adenosine(1518)/adenosine(1519) in 16S rRNA + 4 S-adenosyl-L-methionine = N(6)-dimethyladenosine(1518)/N(6)-dimethyladenosine(1519) in 16S rRNA + 4 S-adenosyl-L-homocysteine + 4 H(+). Specifically dimethylates two adjacent adenosines (A1518 and A1519) in the loop of a conserved hairpin near the 3'-end of 16S rRNA in the 30S particle. May play a critical role in biogenesis of 30S subunits. The polypeptide is Ribosomal RNA small subunit methyltransferase A (Leifsonia xyli subsp. xyli (strain CTCB07)).